Here is a 280-residue protein sequence, read N- to C-terminus: 4-diphosphocytidyl-2-C-methyl-D-erythritol kinase (280 aa).

Lys9 is a catalytic residue. 93–103 (PVAAGLGGGSS) provides a ligand contact to ATP. Asp135 is an active-site residue.

Belongs to the GHMP kinase family. IspE subfamily.

It catalyses the reaction 4-CDP-2-C-methyl-D-erythritol + ATP = 4-CDP-2-C-methyl-D-erythritol 2-phosphate + ADP + H(+). It participates in isoprenoid biosynthesis; isopentenyl diphosphate biosynthesis via DXP pathway; isopentenyl diphosphate from 1-deoxy-D-xylulose 5-phosphate: step 3/6. Functionally, catalyzes the phosphorylation of the position 2 hydroxy group of 4-diphosphocytidyl-2C-methyl-D-erythritol. This chain is 4-diphosphocytidyl-2-C-methyl-D-erythritol kinase, found in Syntrophotalea carbinolica (strain DSM 2380 / NBRC 103641 / GraBd1) (Pelobacter carbinolicus).